We begin with the raw amino-acid sequence, 185 residues long: Large ribosomal subunit protein uL5 (185 aa).

The protein belongs to the universal ribosomal protein uL5 family. Part of the 50S ribosomal subunit; part of the 5S rRNA/L5/L18/L25 subcomplex. Contacts the 5S rRNA and the P site tRNA. Forms a bridge to the 30S subunit in the 70S ribosome.

Functionally, this is one of the proteins that bind and probably mediate the attachment of the 5S RNA into the large ribosomal subunit, where it forms part of the central protuberance. In the 70S ribosome it contacts protein S13 of the 30S subunit (bridge B1b), connecting the 2 subunits; this bridge is implicated in subunit movement. Contacts the P site tRNA; the 5S rRNA and some of its associated proteins might help stabilize positioning of ribosome-bound tRNAs. The chain is Large ribosomal subunit protein uL5 from Bartonella bacilliformis (strain ATCC 35685 / KC583 / Herrer 020/F12,63).